Consider the following 250-residue polypeptide: Ribonuclease PH (250 aa).

Phosphate is bound by residues R86 and 124 to 126; that span reads GTR.

Belongs to the RNase PH family. Homohexameric ring arranged as a trimer of dimers.

The catalysed reaction is tRNA(n+1) + phosphate = tRNA(n) + a ribonucleoside 5'-diphosphate. Phosphorolytic 3'-5' exoribonuclease that plays an important role in tRNA 3'-end maturation. Removes nucleotide residues following the 3'-CCA terminus of tRNAs; can also add nucleotides to the ends of RNA molecules by using nucleoside diphosphates as substrates, but this may not be physiologically important. Probably plays a role in initiation of 16S rRNA degradation (leading to ribosome degradation) during starvation. In Exiguobacterium sibiricum (strain DSM 17290 / CCUG 55495 / CIP 109462 / JCM 13490 / 255-15), this protein is Ribonuclease PH.